We begin with the raw amino-acid sequence, 85 residues long: Serine protease inhibitor Kazal-type 7 (85 aa).

Residues 1-19 (MKITGGLLLLCTVVYFCSS) form the signal peptide. One can recognise a Kazal-like domain in the interval 26-85 (SPKKVDCSIYKKYPVVAIPCPITYLPVCGSDYITYGNECHLCTESLKSNGRVQFLHDGSC). Disulfide bonds link Cys32/Cys67, Cys45/Cys64, and Cys53/Cys85.

It localises to the secreted. Functionally, probable serine protease inhibitor. This is Serine protease inhibitor Kazal-type 7 (SPINK7) from Homo sapiens (Human).